Consider the following 239-residue polypeptide: Ribosomal RNA small subunit methyltransferase G (239 aa).

S-adenosyl-L-methionine is bound by residues Gly-78, Phe-83, Ala-129–Glu-130, and Arg-148.

This sequence belongs to the methyltransferase superfamily. RNA methyltransferase RsmG family.

The protein localises to the cytoplasm. Its function is as follows. Specifically methylates the N7 position of a guanine in 16S rRNA. In Clostridium botulinum (strain Alaska E43 / Type E3), this protein is Ribosomal RNA small subunit methyltransferase G.